Here is a 42-residue protein sequence, read N- to C-terminus: Photosystem I reaction center subunit IX (42 aa).

A helical membrane pass occupies residues 7-27 (FLSTAPVLIMALLTVTAGILI).

This sequence belongs to the PsaJ family.

The protein localises to the cellular thylakoid membrane. Its function is as follows. May help in the organization of the PsaE and PsaF subunits. The chain is Photosystem I reaction center subunit IX from Crocosphaera subtropica (strain ATCC 51142 / BH68) (Cyanothece sp. (strain ATCC 51142)).